The sequence spans 559 residues: NAD-dependent malic enzyme 2 (559 aa).

The Proton donor role is filled by Tyr98. Arg151 serves as a coordination point for NAD(+). Lys169 serves as the catalytic Proton acceptor. The a divalent metal cation site is built by Glu240, Asp241, and Asp264. NAD(+) contacts are provided by Asp264 and Asn413.

This sequence belongs to the malic enzymes family. Homotetramer. Requires Mg(2+) as cofactor. Mn(2+) is required as a cofactor.

It carries out the reaction (S)-malate + NAD(+) = pyruvate + CO2 + NADH. It catalyses the reaction oxaloacetate + H(+) = pyruvate + CO2. The chain is NAD-dependent malic enzyme 2 from Vibrio vulnificus (strain YJ016).